Reading from the N-terminus, the 121-residue chain is Basic phospholipase A2 homolog (121 aa).

Disulfide bonds link cysteine 26-cysteine 115, cysteine 28-cysteine 44, cysteine 43-cysteine 95, cysteine 49-cysteine 121, cysteine 50-cysteine 88, cysteine 57-cysteine 81, and cysteine 75-cysteine 86.

It belongs to the phospholipase A2 family. Group II subfamily. K49 sub-subfamily. As to quaternary structure, homodimer. As to expression, expressed by the venom gland.

It localises to the secreted. Functionally, snake venom phospholipase A2 homolog that lacks enzymatic activity, but has myotoxic and cytolytic activities. The chain is Basic phospholipase A2 homolog from Metlapilcoatlus nummifer (Mexican jumping pitviper).